Here is a 437-residue protein sequence, read N- to C-terminus: Putative ABC transporter ATP-binding protein CTC_00753 (437 aa).

ABC transporter domains lie at 1 to 143 (MERE…LPTI) and 179 to 416 (LKFK…QISK). 219–226 (GENGAGKS) serves as a coordination point for ATP.

It belongs to the ABC transporter superfamily.

The protein localises to the cell membrane. Probably part of an ABC transporter complex. Responsible for energy coupling to the transport system. The protein is Putative ABC transporter ATP-binding protein CTC_00753 of Clostridium tetani (strain Massachusetts / E88).